We begin with the raw amino-acid sequence, 389 residues long: 8-amino-7-oxononanoate synthase (389 aa).

Residue Arg19 participates in substrate binding. Gly106–Tyr107 is a pyridoxal 5'-phosphate binding site. His131 is a substrate binding site. Pyridoxal 5'-phosphate contacts are provided by Ser176, His204, and Thr233. Lys236 carries the post-translational modification N6-(pyridoxal phosphate)lysine. Residue Thr350 participates in substrate binding.

This sequence belongs to the class-II pyridoxal-phosphate-dependent aminotransferase family. BioF subfamily. In terms of assembly, homodimer. Requires pyridoxal 5'-phosphate as cofactor.

It catalyses the reaction 6-carboxyhexanoyl-[ACP] + L-alanine + H(+) = (8S)-8-amino-7-oxononanoate + holo-[ACP] + CO2. It functions in the pathway cofactor biosynthesis; biotin biosynthesis. Functionally, catalyzes the decarboxylative condensation of pimeloyl-[acyl-carrier protein] and L-alanine to produce 8-amino-7-oxononanoate (AON), [acyl-carrier protein], and carbon dioxide. The chain is 8-amino-7-oxononanoate synthase from Ectopseudomonas mendocina (strain ymp) (Pseudomonas mendocina).